Consider the following 343-residue polypeptide: MSIIKTNSEILNQLLYGQDLDAETSNTLMKRWLNDEILEVQTGAFLSALRAKGATGTELSSMADVLLNACKLPVERPNLFMVDTCGTGGDGANTFNISTAVAFVASSCGVNIAKHGNKSASGKVGSADVLLNLGINLNSTLEKVISSIDQIGITFLFAPVWHKSLIKLAPLRKALGIRTVFNQLGPLVNPLRPNAQVLGVASDELLNPMASALSRMEMDRAIVVHGYGGLDEASLEGDNKIIFVDKGELKHSKINVSDFNYQNTSNKDLIVSNDDSYEDILKSVLNGSGQKAHLDVVALNTALVLWVAGIEDDIEKGFKKALFSMSKAEPWNKFLLLKNYLES.

5-phospho-alpha-D-ribose 1-diphosphate is bound by residues Gly86, Gly89–Asp90, Thr94, Asn96–Thr99, Lys114–Gly122, and Ser126. Residue Gly86 participates in anthranilate binding. Position 98 (Ser98) interacts with Mg(2+). Residue Asn117 coordinates anthranilate. Arg172 lines the anthranilate pocket. Asp231 and Glu232 together coordinate Mg(2+).

It belongs to the anthranilate phosphoribosyltransferase family. In terms of assembly, homodimer. The cofactor is Mg(2+).

It catalyses the reaction N-(5-phospho-beta-D-ribosyl)anthranilate + diphosphate = 5-phospho-alpha-D-ribose 1-diphosphate + anthranilate. The protein operates within amino-acid biosynthesis; L-tryptophan biosynthesis; L-tryptophan from chorismate: step 2/5. In terms of biological role, catalyzes the transfer of the phosphoribosyl group of 5-phosphorylribose-1-pyrophosphate (PRPP) to anthranilate to yield N-(5'-phosphoribosyl)-anthranilate (PRA). The chain is Anthranilate phosphoribosyltransferase from Prochlorococcus marinus subsp. pastoris (strain CCMP1986 / NIES-2087 / MED4).